The chain runs to 362 residues: Histidine protein methyltransferase 1 homolog (362 aa).

The segment at 28–89 (KSQKGKEDKN…ACEKQPSLKP (62 aa)) is disordered. Over residues 55 to 73 (SLGSAASSEDTDSPPSTAD) the composition is skewed to polar residues. Residues Ser-62 and Ser-67 each carry the phosphoserine modification. The residue at position 144 (His-144) is a Tele-methylhistidine. S-adenosyl-L-methionine is bound by residues 158-162 (IWECT), Gly-185, and 206-208 (QDY). Residues 237–243 (PAGKRQR) carry the Nuclear localization signal motif. Residues 259–261 (GEW) and Ser-283 contribute to the S-adenosyl-L-methionine site.

This sequence belongs to the methyltransferase superfamily. METTL18 family. Interacts with GRWD1 and members of the heat shock protein 90 and 70 families; these proteins may possibly be methylation substrates for the enzyme. In terms of processing, monomethylated at His-144 through automethylation. Automethylation at His-144 positively regulates the methyltransferase activity toward RPL3. Probably methylated on other residues.

Its subcellular location is the cytoplasm. The protein localises to the cytosol. The protein resides in the nucleus. It localises to the nucleolus. It carries out the reaction L-histidyl-[protein] + S-adenosyl-L-methionine = N(tele)-methyl-L-histidyl-[protein] + S-adenosyl-L-homocysteine + H(+). Its function is as follows. Protein-L-histidine N-tele-methyltransferase that specifically monomethylates RPL3, thereby regulating translation elongation. Histidine methylation of RPL3 regulates translation elongation by slowing ribosome traversal on tyrosine codons: slower elongation provides enough time for proper folding of synthesized proteins and prevents cellular aggregation of tyrosine-rich proteins. This is Histidine protein methyltransferase 1 homolog from Rattus norvegicus (Rat).